The primary structure comprises 284 residues: Elongation factor Ts (284 aa).

The segment at 80-83 is involved in Mg(2+) ion dislocation from EF-Tu; the sequence is TDFV.

This sequence belongs to the EF-Ts family.

The protein localises to the cytoplasm. Associates with the EF-Tu.GDP complex and induces the exchange of GDP to GTP. It remains bound to the aminoacyl-tRNA.EF-Tu.GTP complex up to the GTP hydrolysis stage on the ribosome. This is Elongation factor Ts from Neisseria meningitidis serogroup C (strain 053442).